Here is a 140-residue protein sequence, read N- to C-terminus: Large-conductance mechanosensitive channel (140 aa).

2 consecutive transmembrane segments (helical) span residues 21-41 (VGVIIGGAFGKIVESLVGDVI) and 82-102 (GSFITVAINFMILAFIIFMMI).

The protein belongs to the MscL family. In terms of assembly, homopentamer.

The protein localises to the cell inner membrane. Channel that opens in response to stretch forces in the membrane lipid bilayer. May participate in the regulation of osmotic pressure changes within the cell. The sequence is that of Large-conductance mechanosensitive channel from Leptothrix cholodnii (strain ATCC 51168 / LMG 8142 / SP-6) (Leptothrix discophora (strain SP-6)).